A 91-amino-acid chain; its full sequence is Large ribosomal subunit protein bL27 (91 aa).

The protein belongs to the bacterial ribosomal protein bL27 family.

The polypeptide is Large ribosomal subunit protein bL27 (Deinococcus deserti (strain DSM 17065 / CIP 109153 / LMG 22923 / VCD115)).